The sequence spans 117 residues: Large ribosomal subunit protein uL18 (117 aa).

The protein belongs to the universal ribosomal protein uL18 family. As to quaternary structure, part of the 50S ribosomal subunit; part of the 5S rRNA/L5/L18/L25 subcomplex. Contacts the 5S and 23S rRNAs.

In terms of biological role, this is one of the proteins that bind and probably mediate the attachment of the 5S RNA into the large ribosomal subunit, where it forms part of the central protuberance. In Aster yellows witches'-broom phytoplasma (strain AYWB), this protein is Large ribosomal subunit protein uL18.